The following is a 391-amino-acid chain: Chaperone protein DnaJ (391 aa).

A J domain is found at 2 to 67 (DYYDVLGVSK…QKRESYDRYG (66 aa)). The segment at 148–226 (GVEKELLVSG…CRGQGRVKDK (79 aa)) adopts a CR-type zinc-finger fold. The Zn(2+) site is built by Cys161, Cys164, Cys178, Cys181, Cys200, Cys203, Cys214, and Cys217. CXXCXGXG motif repeat units follow at residues 161 to 168 (CTTCSGSG), 178 to 185 (CERCKGSG), 200 to 207 (CPECGGEG), and 214 to 221 (CSNCRGQG).

This sequence belongs to the DnaJ family. As to quaternary structure, homodimer. Requires Zn(2+) as cofactor.

The protein localises to the cytoplasm. In terms of biological role, participates actively in the response to hyperosmotic and heat shock by preventing the aggregation of stress-denatured proteins and by disaggregating proteins, also in an autonomous, DnaK-independent fashion. Unfolded proteins bind initially to DnaJ; upon interaction with the DnaJ-bound protein, DnaK hydrolyzes its bound ATP, resulting in the formation of a stable complex. GrpE releases ADP from DnaK; ATP binding to DnaK triggers the release of the substrate protein, thus completing the reaction cycle. Several rounds of ATP-dependent interactions between DnaJ, DnaK and GrpE are required for fully efficient folding. Also involved, together with DnaK and GrpE, in the DNA replication of plasmids through activation of initiation proteins. This chain is Chaperone protein DnaJ, found in Chlamydia felis (strain Fe/C-56) (Chlamydophila felis).